Here is a 345-residue protein sequence, read N- to C-terminus: Uroporphyrinogen decarboxylase (345 aa).

Residues 27 to 31 (RQAGR), Phe46, Asp76, Tyr152, Ser207, and His321 contribute to the substrate site.

Belongs to the uroporphyrinogen decarboxylase family. As to quaternary structure, homodimer.

The protein localises to the cytoplasm. It carries out the reaction uroporphyrinogen III + 4 H(+) = coproporphyrinogen III + 4 CO2. The protein operates within porphyrin-containing compound metabolism; protoporphyrin-IX biosynthesis; coproporphyrinogen-III from 5-aminolevulinate: step 4/4. In terms of biological role, catalyzes the decarboxylation of four acetate groups of uroporphyrinogen-III to yield coproporphyrinogen-III. The protein is Uroporphyrinogen decarboxylase of Staphylococcus aureus (strain Mu3 / ATCC 700698).